A 427-amino-acid polypeptide reads, in one-letter code: MAP kinase-interacting serine/threonine-protein kinase 1 (427 aa).

Positions 1-11 (MVSSQKLEKPI) are enriched in basic and acidic residues. The tract at residues 1–37 (MVSSQKLEKPIEMGSSEPLPIVDSDKRRKKKRKTRAT) is disordered. Thr-34 bears the Phosphothreonine; by PAK2 mark. Ser-39 carries the phosphoserine; by PAK2 modification. Residues 49-333 (QLTSELLGEG…AAQVLQHPWV (285 aa)) enclose the Protein kinase domain. ATP contacts are provided by residues 55 to 63 (LGEGAYAKV) and Lys-78. The Proton acceptor role is filled by Asp-170. Residues Ser-180 and Ser-185 each carry the phosphoserine modification. 3 positions are modified to phosphothreonine: Thr-209, Thr-214, and Thr-344. Positions 407 to 427 (RALAQAGRSRDANPCLTPAGL) are disordered.

This sequence belongs to the protein kinase superfamily. CAMK Ser/Thr protein kinase family. In terms of assembly, interacts with the C-terminal regions of EIF4G1 and EIF4G2. Also binds to dephosphorylated ERK1 and ERK2, and to the p38 kinases. Mg(2+) is required as a cofactor. In terms of processing, dual phosphorylation of Thr-209 and Thr-214 activates the kinase. Phosphorylation of Thr-344 activates the kinase. MAPK3/ERK1 is one of the kinases which activate MKNK1/MNK1. Phosphorylation by PAK2 leads to a reduced phosphorylation of EIF4G1. In terms of tissue distribution, ubiquitously expressed in all tissues examined, with high levels in skeletal muscle.

It carries out the reaction L-seryl-[protein] + ATP = O-phospho-L-seryl-[protein] + ADP + H(+). It catalyses the reaction L-threonyl-[protein] + ATP = O-phospho-L-threonyl-[protein] + ADP + H(+). Phosphorylated and activated by the p38 kinases and kinases in the Erk pathway. May play a role in the response to environmental stress and cytokines. Appears to regulate translation by phosphorylating EIF4E, thus increasing the affinity of this protein for the 7-methylguanosine-containing mRNA cap. This is MAP kinase-interacting serine/threonine-protein kinase 1 (Mknk1) from Mus musculus (Mouse).